A 250-amino-acid chain; its full sequence is 5-oxoprolinase subunit A (250 aa).

This sequence belongs to the LamB/PxpA family. Forms a complex composed of PxpA, PxpB and PxpC.

It catalyses the reaction 5-oxo-L-proline + ATP + 2 H2O = L-glutamate + ADP + phosphate + H(+). Functionally, catalyzes the cleavage of 5-oxoproline to form L-glutamate coupled to the hydrolysis of ATP to ADP and inorganic phosphate. The sequence is that of 5-oxoprolinase subunit A from Streptomyces coelicolor (strain ATCC BAA-471 / A3(2) / M145).